Reading from the N-terminus, the 446-residue chain is 5-hydroxytryptamine receptor 7 (446 aa).

The Extracellular segment spans residues 1-84 (MMGVNSSGRP…INYGRAEKVV (84 aa)). N-linked (GlcNAc...) asparagine glycosylation is found at Asn-5 and Asn-67. Residues 85-109 (IGSILTLITLLTIAGNCLVVISVCF) form a helical membrane-spanning segment. The Cytoplasmic segment spans residues 110–119 (VKKLRQPSNY). A helical membrane pass occupies residues 120–141 (LIVSLALADLSVAVAVIPFVSV). The Extracellular segment spans residues 142–153 (TDLIGGKWIFGH). Residues 154–179 (FFCNVFIAMDVMCCTASIMTLCVISI) form a helical membrane-spanning segment. A disulfide bridge links Cys-156 with Cys-232. A serotonin-binding site is contributed by Asp-163. At 180-199 (DRYLGITRPLTYPVRQNGKC) the chain is on the cytoplasmic side. A helical transmembrane segment spans residues 200-220 (MPKMILSVWLLSASITLPPLF). Residues 221–238 (GWAQNVNDDKVCLISQDF) lie on the Extracellular side of the membrane. A helical membrane pass occupies residues 239–261 (GYTIYSTAVAFYIPMSVMLFMYY). Residues 262-327 (RIYKAARKSA…SIFKREQKAA (66 aa)) are Cytoplasmic-facing. The helical transmembrane segment at 328 to 353 (TTLGIIVGAFTVCWLPFFLLSTARPF) threads the bilayer. Residues 354-364 (ICGTACSCIPL) are Extracellular-facing. The chain crosses the membrane as a helical span at residues 365 to 388 (WVERTCLWLGYANSLINPFIYAFF). Topologically, residues 389–446 (NRDLRTTYRSLLQCQYRNINRKLSAAGMHEALKLAERPERPECVLQNSDYCRKKGHDS) are cytoplasmic. The S-palmitoyl cysteine moiety is linked to residue Cys-402.

The protein belongs to the G-protein coupled receptor 1 family.

It is found in the cell membrane. Its function is as follows. G-protein coupled receptor for 5-hydroxytryptamine (serotonin), a biogenic hormone that functions as a neurotransmitter, a hormone and a mitogen. Ligand binding causes a conformation change that triggers signaling via guanine nucleotide-binding proteins (G proteins) and modulates the activity of downstream effectors. HTR7 is coupled to G(s) G alpha proteins and mediates activation of adenylate cyclase activity. The polypeptide is 5-hydroxytryptamine receptor 7 (HTR7) (Cavia porcellus (Guinea pig)).